The chain runs to 189 residues: UPF0312 protein VV2_0231 (189 aa).

An N-terminal signal peptide occupies residues 1–22 (MRKSVIATGLALMMAVPFAANA).

The protein belongs to the UPF0312 family. Type 1 subfamily.

The protein localises to the periplasm. The protein is UPF0312 protein VV2_0231 of Vibrio vulnificus (strain CMCP6).